The sequence spans 1174 residues: PR domain zinc finger protein 15 (1174 aa).

Positions 75–185 (SNLEIRRLDD…AGTELRVWYA (111 aa)) constitute an SET domain. The disordered stretch occupies residues 252–307 (LPAGGQQHEAASEKEPDAPRMEPPTAAESKSIQSVMVTKEPKKKPRRGRKPKASKV). Positions 261–271 (AASEKEPDAPR) are enriched in basic and acidic residues. The span at 292–304 (PKKKPRRGRKPKA) shows a compositional bias: basic residues. 2 C2H2-type zinc fingers span residues 402–424 (HQCGTCSKVFQNSSNLSRHVRSH) and 434–457 (FKCEECSKLFSRKESLKQHVSYKH). The segment at 468 to 486 (YRCGSCGKTFRMESALEFH) adopts a C2H2-type 3; degenerate zinc-finger fold. C2H2-type zinc fingers lie at residues 495–517 (FQCEMCFRFFSTNSNLSKHKKKH) and 522–544 (FACEVCSKMFYRKDVMLDHQRRH). Lys552 is covalently cross-linked (Glycyl lysine isopeptide (Lys-Gly) (interchain with G-Cter in SUMO2)). C2H2-type zinc fingers lie at residues 571 to 593 (SGCPVCGKVFSCRSNMNKHLLTH) and 598 to 620 (YTCEICGRKFFRVDVLRDHIHVH). Residues 639–658 (IGISSEENDDNSDESADSEP) are disordered. The span at 644–655 (EENDDNSDESAD) shows a compositional bias: acidic residues. C2H2-type zinc fingers lie at residues 661–684 (YSCKRCQLTFGRGKEYLKHIMEVH), 689–711 (HGCSICHRRFALKATYHAHMVIH), 725–747 (HPCEICGRIFNSIGNLERHKLIH), 753–775 (HACEQCGKSFARKDMLKEHMRVH), 781–803 (YLCAECGKGMKTKHALRHHMKLH), 809–831 (YECKECHRKFAQKVNMLKHYKRH), 837–859 (FMCELCGKTFSERNTMETHKLIH), and 865–888 (WTCSVCDKKYVTEYMLQKHVQLTH). 2 disordered regions span residues 957 to 1007 (AEGK…GDET) and 1147 to 1174 (LQPPQAPAAPQQAVQPQVQNEQQQMYSY). Positions 962–973 (GKAAKRSHKRKQ) are enriched in basic residues. A compositionally biased stretch (low complexity) spans 1154–1174 (AAPQQAVQPQVQNEQQQMYSY).

Expressed in embryonic stem cells (ESCs) (at protein level).

It is found in the nucleus. In terms of biological role, sequence-specific DNA-binding transcriptional regulator. Plays a role as a molecular node in a transcriptional network regulating embryonic development and cell fate decision. Stimulates the expression of upstream key transcriptional activators and repressors of the Wnt/beta-catenin and MAPK/ERK pathways, respectively, that are essential for naive pluripotency and self-renewal maintenance of embryonic stem cells (ESCs). Specifically promotes SPRY1 and RSPO1 transcription activation through recognition and direct binding of a specific DNA sequence in their promoter regions. Also plays a role in induced pluripotent stem cells (iPSCs) reprogramming. Involved in early embryo development. The sequence is that of PR domain zinc finger protein 15 from Mus musculus (Mouse).